A 322-amino-acid chain; its full sequence is 4-diphosphocytidyl-2-C-methyl-D-erythritol kinase (322 aa).

Residue Lys18 is part of the active site. Residue 130–140 coordinates ATP; that stretch reads PMGAGLGGGSS. Asp172 is a catalytic residue.

It belongs to the GHMP kinase family. IspE subfamily.

The catalysed reaction is 4-CDP-2-C-methyl-D-erythritol + ATP = 4-CDP-2-C-methyl-D-erythritol 2-phosphate + ADP + H(+). It participates in isoprenoid biosynthesis; isopentenyl diphosphate biosynthesis via DXP pathway; isopentenyl diphosphate from 1-deoxy-D-xylulose 5-phosphate: step 3/6. In terms of biological role, catalyzes the phosphorylation of the position 2 hydroxy group of 4-diphosphocytidyl-2C-methyl-D-erythritol. The chain is 4-diphosphocytidyl-2-C-methyl-D-erythritol kinase from Psychrobacter cryohalolentis (strain ATCC BAA-1226 / DSM 17306 / VKM B-2378 / K5).